A 477-amino-acid polypeptide reads, in one-letter code: Serine/threonine protein phosphatase 2A 55 kDa regulatory subunit B' delta isoform (477 aa).

This sequence belongs to the phosphatase 2A regulatory subunit B56 family. As to quaternary structure, PP2A consists of a common heteromeric enzyme, composed of a catalytic subunit (subunits C), a constant regulatory subunit (subunit A), and a variety of regulatory subunits such as subunits B (the R2/B/PR55/B55, R3/B''/PR72/PR130/PR59 and R5/B'/B56 families). Interacts with SRK2E/OST1. Expressed ubiquitously.

Its subcellular location is the cytoplasm. The B regulatory subunit may modulate substrate selectivity and catalytic activity, and may also direct the localization of the catalytic enzyme to a particular subcellular compartment. This is Serine/threonine protein phosphatase 2A 55 kDa regulatory subunit B' delta isoform (B'DELTA) from Arabidopsis thaliana (Mouse-ear cress).